The sequence spans 377 residues: Terpene synthase 1 (377 aa).

The DDxx(x)D/E motif signature appears at 81-86 (DDALDA). The NDxxSxxxD/E motif signature appears at 221–229 (NDLVSYEKE). Residues 326-359 (RKQSSSPNLTNSISIPTNNTNNSNNITSSPNKKQ) form a disordered region. Over residues 335–356 (TNSISIPTNNTNNSNNITSSPN) the composition is skewed to low complexity.

It belongs to the terpene synthase family.

It carries out the reaction (2E,6E)-farnesyl diphosphate = (2S,3R,6S,9S)-(-)-protoillud-7-ene + diphosphate. Terpene synthase that converts its substrate farnesyl diphosphate (FPP) into the sesquiterpene protoillud-7-ene. This Dictyostelium purpureum (Slime mold) protein is Terpene synthase 1.